Consider the following 95-residue polypeptide: UPF0473 protein ABC1595 (95 aa).

The protein belongs to the UPF0473 family.

This chain is UPF0473 protein ABC1595, found in Shouchella clausii (strain KSM-K16) (Alkalihalobacillus clausii).